The primary structure comprises 154 residues: Dau c 1 isoallergen Dau c 1.0301 (154 aa).

This sequence belongs to the BetVI family. Expressed in roots.

The protein is Dau c 1 isoallergen Dau c 1.0301 of Daucus carota (Wild carrot).